Reading from the N-terminus, the 660-residue chain is ATP-dependent zinc metalloprotease FtsH (660 aa).

A disordered region spans residues 1–20; it reads MMPSSQRPSPRGSRQSPSPD. Over 1-24 the chain is Cytoplasmic; it reads MMPSSQRPSPRGSRQSPSPDQRGR. A helical membrane pass occupies residues 25–45; the sequence is IAFAILATLVVAVLLLTLFSH. The Extracellular portion of the chain corresponds to 46–118; it reads APSGQPLGYS…VQVSYITPGP (73 aa). The chain crosses the membrane as a helical span at residues 119-139; that stretch reads GIASTIIEYVIFFGIFIGIWV. Residues 140-660 lie on the Cytoplasmic side of the membrane; sequence YLTRRTQGSV…ASHDDTDPVS (521 aa). Residue 213-220 coordinates ATP; it reads GPPGTGKT. A Zn(2+)-binding site is contributed by histidine 435. The active site involves glutamate 436. Zn(2+) contacts are provided by histidine 439 and aspartate 511.

It in the central section; belongs to the AAA ATPase family. In the C-terminal section; belongs to the peptidase M41 family. Homohexamer. Requires Zn(2+) as cofactor.

Its subcellular location is the cell membrane. Functionally, acts as a processive, ATP-dependent zinc metallopeptidase for both cytoplasmic and membrane proteins. Plays a role in the quality control of integral membrane proteins. The polypeptide is ATP-dependent zinc metalloprotease FtsH (Acidimicrobium ferrooxidans (strain DSM 10331 / JCM 15462 / NBRC 103882 / ICP)).